Consider the following 378-residue polypeptide: MPYSNLHPAIPRPRGHRSKYVALIFLVASLMILWVAKDPPNHTLKYLALHLASHELGLLLKNLCCLAEELCHVQSRYQGSYWKAVRACLGCPIHCMAMILLSSYFYFLQNTADIYLSWMFGLLVLYKSLSMLLGLQSLTPAEVSAVCEEKKLNVAHGLAWSYYIGYLRLILPGLQARIRMFNQLHNNMLSGAGSRRLYILFPLDCGVPDNLSVVDPNIRFRDMLPQQNIDRAGIKNRVYSNSVYEILENGQPAGVCILEYATPLQTLFAMSQDAKAGFSREDRLEQAKLFCRTLEEILEDVPESRNNCRLIVYQEPTDGNSFSLSQEVLRHIRQEEKEEVTMNAPMTSVAPPPSVLSQEPRLLISGMDQPLPLRTDLI.

Over 1 to 17 (MPYSNLHPAIPRPRGHR) the chain is Cytoplasmic. The tract at residues 1–189 (MPYSNLHPAI…MFNQLHNNML (189 aa)) is mediates interaction with ZDHHC1 and ZDHHC11. A helical membrane pass occupies residues 18–34 (SKYVALIFLVASLMILW). Residue K19 forms a Glycyl lysine isopeptide (Lys-Gly) (interchain with G-Cter in ubiquitin) linkage. At 35–44 (VAKDPPNHTL) the chain is on the lumenal side. The chain crosses the membrane as a helical span at residues 45–69 (KYLALHLASHELGLLLKNLCCLAEE). Over 70–91 (LCHVQSRYQGSYWKAVRACLGC) the chain is Cytoplasmic. S-palmitoyl cysteine attachment occurs at residues C88 and C91. The helical transmembrane segment at 92 to 106 (PIHCMAMILLSSYFY) threads the bilayer. Over 107–115 (FLQNTADIY) the chain is Lumenal. The helical transmembrane segment at 116 to 133 (LSWMFGLLVLYKSLSMLL) threads the bilayer. At 134-378 (GLQSLTPAEV…QPLPLRTDLI (245 aa)) the chain is on the cytoplasmic side. K150 is covalently cross-linked (Glycyl lysine isopeptide (Lys-Gly) (interchain with G-Cter in ubiquitin)). The tract at residues 152–339 (LNVAHGLAWS…RHIRQEEKEE (188 aa)) is cyclic dinucleotide-binding domain (CBD). G165 lines the 3',3'-c-di-GMP pocket. Y166 lines the 2',3'-cUAMP pocket. Residue Y166 coordinates 3',3'-cGAMP. A Glycyl lysine isopeptide (Lys-Gly) (interchain with G-Cter in ubiquitin) cross-link involves residue K235. R237 provides a ligand contact to 2',3'-cUAMP. R237 serves as a coordination point for 3',3'-cGAMP. R237 contacts 2',3'-cGAMP. Residues 237 to 240 (RVYS) and T262 each bind 3',3'-c-di-GMP. S240 carries the post-translational modification Phosphoserine. T262 is a binding site for 2',3'-cUAMP. Residue T262 participates in 2',3'-cGAMP binding. A Glycyl lysine isopeptide (Lys-Gly) (interchain with G-Cter in SUMO) cross-link involves residue K337. Positions 339 to 378 (EVTMNAPMTSVAPPPSVLSQEPRLLISGMDQPLPLRTDLI) are C-terminal tail (CTT). S354 carries the phosphoserine; by MAP3K7 modification. S357 and S365 each carry phosphoserine; by TBK1. Positions 362-365 (LLIS) match the pLxIS motif motif.

Belongs to the STING family. Homodimer; forms a homodimer in absence of cyclic nucleotide (c-di-GMP or cGAMP); 'Lys-63'-linked ubiquitination at Lys-150 is required for homodimerization. Homotetramer; in presence of cyclic nucleotide (c-di-GMP or cGAMP), forms tetramers and higher-order oligomers through side-by-side packing. Interacts (when phosphorylated) with IRF3; following activation and phosphorylation on the pLxIS motif by TBK1, recruits IRF3. Interacts with RIGI, MAVS and SSR2. Interacts with RNF5 and TRIM56. Interacts with TBK1; when homodimer, leading to subsequent production of IFN-beta. Interacts with IFIT1 and IFIT2. Interacts with TRIM29; this interaction induces STING1 ubiquitination and subsequent degradation. Associates with the MHC-II complex. Interacts with STEEP1; interaction takes place upon cGAMP-activation and STING1 phosphorylation by MAP3K7/TAK1 and promotes STING1 translocation to COPII vesicles. Interacts with SEC24A, SEC24B and SEC24C; promoting translocation to COPII vesicles. Interacts (when ubiquitinated) with SQSTM1; leading to relocalization to autophagosomes. Interacts with SURF4. Interacts with HNRNPA2B1. Interacts with ZDHHC1; ZDHHC1 constitutively interacts with STING1 and in presence of DNA viruses activates it by promoting its cGAMP-induced oligomerization and the recruitment of downstream signaling components. Interacts with ZDHHC11; in presence of DNA viruses promotes the recruitment of IRF3 to STING1. Interacts with TOMM70. Interacts with IFI204. Interacts with TAB1; promoting recruitment of TAB1 to the endoplasmic reticulum membrane and subsequent activation of MAP3K7/TAK1. Interacts (via transmembrane domain) with TMEM203. Interacts with DDX41. Post-translationally, phosphorylation by TBK1 leads to activation and production of IFN-beta. Following cyclic nucleotide (c-di-GMP or cGAMP)-binding, activation and translocation from the endoplasmic reticulum, STING1 is phosphorylated by TBK1 at Ser-365 in the pLxIS motif. The phosphorylated pLxIS motif constitutes an IRF3-binding motif, leading to recruitment of the transcription factor IRF3 to induce type-I interferons and other cytokines. The phosphorylated pLxIS motif facilitates SENP2 recruitment during late phase of viral infection. Phosphorylated on tyrosine residues upon MHC-II aggregation. Dephosphorylation by PPP6C leads to inactivation and decreased production of IFN-beta. Phosphorylation at Ser-357 is also required to activate IRF3. Phosphorylation at Ser-354 by MAP3K7/TAK1 facilitates its interaction with STEEP1, promoting STING1 translocation to COPII vesicles. In terms of processing, ubiquitinated. Ubiquitinated via 'Lys-63'-linked ubiquitin chains in response to double-stranded DNA treatment, leading to relocalization to autophagosomes and subsequent degradation; this process is dependent on SQSTM1. 'Lys-63'-linked ubiquitination mediated by TRIM56 at Lys-150 promotes homodimerization and recruitment of the antiviral kinase TBK1 and subsequent production of IFN-beta. 'Lys-48'-linked polyubiquitination at Lys-150 occurring after viral infection is mediated by RNF5 and leads to proteasomal degradation. 'Lys-11'-linked polyubiquitination at Lys-150 by RNF26 leads to stabilize STING1: it protects STING1 from RNF5-mediated 'Lys-48'-linked polyubiquitination. 'Lys-33'-linked and 'Lys-48'-linked deubiquitinated by USP20; leading to its stabilization and promotion of innate antiviral response. 'Lys-48'-linked deubiquitinated by USP44; leading to its stabilization and promotion of innate antiviral response. Deubiquitinated by USP13; leading to inhibition of innate antiviral response. 'Lys-63'-linked deubiquitinated by USP49; leading to inhibition of the subsequent recruitment of TBK1 to the signaling complex. 'Lys-63'-linked ubiquitination mediated by RNF39 promotes the activation of the cGAS-STING pathway. MARCHF5-mediated ubiquitination prevents the oxidation-induced polymer formation. Sumoylated at Lys-337 by TRIM38 during the early phase of viral infection, promoting its stability by preventing its relocalization to autophagosomes and subsequent degradation. Desumoylated by SENP2 during the late phase of viral infection. Post-translationally, palmitoylation takes place in the Golgi apparatus and creates a platform for the recruitment of TBK1. In terms of tissue distribution, present in spleen and thymus tissue. Also present in dendritic cells (at protein level).

The protein resides in the endoplasmic reticulum membrane. The protein localises to the cytoplasm. Its subcellular location is the perinuclear region. It is found in the endoplasmic reticulum-Golgi intermediate compartment membrane. It localises to the golgi apparatus membrane. The protein resides in the cytoplasmic vesicle. The protein localises to the autophagosome membrane. Its subcellular location is the mitochondrion outer membrane. It is found in the cell membrane. It localises to the lysosome membrane. It carries out the reaction H(+)(in) = H(+)(out). Activated by anticancer drug 5,6-dimethylxanthenone 4-acetic acid (DMXAA). Specifically inhibited by nitrofuran derivatives C-178 and C-176, which covalently bind Cys-91 and prevent palmitoylation and subsequent activation od STING1. Functionally, facilitator of innate immune signaling that acts as a sensor of cytosolic DNA from bacteria and viruses and promotes the production of type I interferon (IFN-alpha and IFN-beta). Innate immune response is triggered in response to non-CpG double-stranded DNA from viruses and bacteria delivered to the cytoplasm. Acts by binding cyclic dinucleotides: recognizes and binds cyclic di-GMP (c-di-GMP), a second messenger produced by bacteria, cyclic UMP-AMP (2',3'-cUAMP), and cyclic GMP-AMP (cGAMP), a messenger produced by CGAS in response to DNA virus in the cytosol. Upon binding to c-di-GMP, cUAMP or cGAMP, STING1 oligomerizes, translocates from the endoplasmic reticulum and is phosphorylated by TBK1 on the pLxIS motif, leading to recruitment and subsequent activation of the transcription factor IRF3 to induce expression of type I interferon and exert a potent anti-viral state. Exhibits 2',3' phosphodiester linkage-specific ligand recognition: can bind both 2'-3' linked cGAMP (2'-3'-cGAMP) and 3'-3' linked cGAMP but is preferentially activated by 2'-3' linked cGAMP. The preference for 2'-3'-cGAMP, compared to other linkage isomers is probably due to the ligand itself, whichs adopts an organized free-ligand conformation that resembles the STING1-bound conformation and pays low energy costs in changing into the active conformation. In addition to promote the production of type I interferons, plays a direct role in autophagy. Following cGAMP-binding, STING1 buds from the endoplasmic reticulum into COPII vesicles, which then form the endoplasmic reticulum-Golgi intermediate compartment (ERGIC). The ERGIC serves as the membrane source for WIPI2 recruitment and LC3 lipidation, leading to formation of autophagosomes that target cytosolic DNA or DNA viruses for degradation by the lysosome. Promotes autophagy by acting as a proton channel that directs proton efflux from the Golgi to facilitate MAP1LC3B/LC3B lipidation. The autophagy- and interferon-inducing activities can be uncoupled and autophagy induction is independent of TBK1 phosphorylation. Autophagy is also triggered upon infection by bacteria: following c-di-GMP-binding, which is produced by live Gram-positive bacteria, promotes reticulophagy. May be involved in translocon function, the translocon possibly being able to influence the induction of type I interferons. May be involved in transduction of apoptotic signals via its association with the major histocompatibility complex class II (MHC-II). In Mus musculus (Mouse), this protein is Stimulator of interferon genes protein.